The following is a 662-amino-acid chain: UvrABC system protein B (662 aa).

One can recognise a Helicase ATP-binding domain in the interval 25-182; it reads KGIEKREKFQ…KKLVEIQYER (158 aa). Position 38 to 45 (38 to 45) interacts with ATP; that stretch reads GVTGSGKT. The short motif at 91–114 is the Beta-hairpin element; sequence YYDYYQPEAYVAQSDTYIEKDASI. Residues 429–595 form the Helicase C-terminal domain; that stretch reads QIDDLYTSIQ…TIIKDIREVI (167 aa). The 36-residue stretch at 622–657 folds into the UVR domain; the sequence is DKLIEKYEEEMKEAAQNLQFEKAAHLRDVIYKLKKD.

It belongs to the UvrB family. In terms of assembly, forms a heterotetramer with UvrA during the search for lesions. Interacts with UvrC in an incision complex.

Its subcellular location is the cytoplasm. Functionally, the UvrABC repair system catalyzes the recognition and processing of DNA lesions. A damage recognition complex composed of 2 UvrA and 2 UvrB subunits scans DNA for abnormalities. Upon binding of the UvrA(2)B(2) complex to a putative damaged site, the DNA wraps around one UvrB monomer. DNA wrap is dependent on ATP binding by UvrB and probably causes local melting of the DNA helix, facilitating insertion of UvrB beta-hairpin between the DNA strands. Then UvrB probes one DNA strand for the presence of a lesion. If a lesion is found the UvrA subunits dissociate and the UvrB-DNA preincision complex is formed. This complex is subsequently bound by UvrC and the second UvrB is released. If no lesion is found, the DNA wraps around the other UvrB subunit that will check the other stand for damage. The chain is UvrABC system protein B from Clostridium botulinum (strain Langeland / NCTC 10281 / Type F).